A 753-amino-acid polypeptide reads, in one-letter code: Putative cyclic nucleotide-gated ion channel 8 (753 aa).

Over 1-111 (MYKSQYISGH…DKTLLLWNRM (111 aa)) the chain is Cytoplasmic. A helical membrane pass occupies residues 112-132 (FVISCILAVSVDPLFFYLPIV). Topologically, residues 133–145 (DNSKNCIGIDSKL) are extracellular. The chain crosses the membrane as a helical span at residues 146 to 166 (AVTTTTLRTIIDVFYLTRMAL). Residues 167–199 (QFRTAYIAPSSRVFGRGELVIDPAKIAERYLTR) are Cytoplasmic-facing. The helical transmembrane segment at 200–220 (YFIVDFLAVLPLPQIAVWKFL) threads the bilayer. The Extracellular portion of the chain corresponds to 221–233 (HGSKGTDVLPTKQ). A helical membrane pass occupies residues 234-254 (ALLHIVITQYIPRFVRFIPLT). At 255–274 (SELKKTAGAFAEGAWAGAAY) the chain is on the cytoplasmic side. Residues 275-295 (YLLWYMLASHITGAFWYMLSV) form a helical membrane-spanning segment. Residues 296 to 402 (ERNDTCLRSA…QGLQTSTYPG (107 aa)) lie on the Extracellular side of the membrane. Residues 403 to 423 (EVLFSIAIAVAGLLLFALLIG) traverse the membrane as a helical segment. The Cytoplasmic segment spans residues 424–753 (NMQTYLQSLT…FEALDTDDLN (330 aa)). Residues 508-638 (LFAN…TFRF) and glutamate 579 contribute to the a nucleoside 3',5'-cyclic phosphate site. The tract at residues 624–639 (FRRLHSRQVQQTFRFY) is calmodulin-binding. Residues 644–673 (RTWAACFIQAAWRRHLRRKIAELRRKEEEE) form the IQ domain. The tract at residues 731-753 (KSLMNLTKPSEPDFEALDTDDLN) is disordered. Residues 742 to 753 (PDFEALDTDDLN) are compositionally biased toward acidic residues.

It belongs to the cyclic nucleotide-gated cation channel (TC 1.A.1.5) family. Homotetramer or heterotetramer.

Its subcellular location is the cell membrane. Its function is as follows. Putative cyclic nucleotide-gated ion channel. In Arabidopsis thaliana (Mouse-ear cress), this protein is Putative cyclic nucleotide-gated ion channel 8 (CNGC8).